The following is a 647-amino-acid chain: Zinc transporter ZIP4 (647 aa).

The first 22 residues, 1–22 (MASLVSLELGLLLAVLVVTATA), serve as a signal peptide directing secretion. The Extracellular segment spans residues 23 to 327 (SPPAGLLSLL…QDQLSQSERY (305 aa)). Cystine bridges form between Cys57/Cys62, Cys65/Cys111, and Cys160/Cys195. Residues 236–255 (EAHSDHSHRHRGASSRDPVP) form a disordered region. A glycan (N-linked (GlcNAc...) asparagine) is linked at Asn261. A disulfide bridge links Cys270 with Cys309. A helical transmembrane segment spans residues 328-348 (LYGSLATLLICLCAVFGLLLL). The Cytoplasmic portion of the chain corresponds to 349–359 (TCTGCRGVTHY). The helical transmembrane segment at 360–380 (ILQTFLSLAVGAVTGDAVLHL) threads the bilayer. Residues 381–402 (TPKVLGLHTHSEEGLSPQPTWR) are Extracellular-facing. A helical membrane pass occupies residues 403 to 423 (LLAMLAGLYAFFLFENLFNLL). Topologically, residues 424–498 (LPRDPEDLED…LSPELRLLPY (75 aa)) are cytoplasmic. The short motif at 452–454 (LQL) is the Essential for SLC39A4 endocytosis element. The interval 458–484 (ELRQPKPPHEGSRADLVAEESPELLNP) is disordered. Basic and acidic residues predominate over residues 460 to 470 (RQPKPPHEGSR). A helical membrane pass occupies residues 499 to 518 (MITLGDAVHNFADGLAVGAA). Residues His507, Asn508, and Asp511 each coordinate Zn(2+). The Extracellular portion of the chain corresponds to 519 to 526 (FASSWKTG). Residues 527-553 (LATSLAVFCHELPHELGDFAALLHAGL) traverse the membrane as a helical segment. Zn(2+)-binding residues include His536, Glu537, and His540. At 554–558 (SVRQA) the chain is on the cytoplasmic side. The chain crosses the membrane as a helical span at residues 559–579 (LLLNLASALTAFAGLYVALAV). Residues 580-586 (GVSEESE) are Extracellular-facing. The chain crosses the membrane as a helical span at residues 587–607 (AWILAVATGLFLYVALCDMLP). At 608 to 617 (AMLKVRDPRP) the chain is on the cytoplasmic side. A helical membrane pass occupies residues 618–638 (WLLFLLHNVGLLGGWTVLLLL). Residues 639-647 (SLYEDDITF) are Extracellular-facing.

Belongs to the ZIP transporter (TC 2.A.5) family. As to quaternary structure, homodimer; homodimerization is mediated by the transmembrane domain. The extracellular N-terminal ectodomain is cleaved when cells are Zn(2+) deficient, N-terminally cleaved SLC39A4 is internalized at a faster rate. Post-translationally, under excess Zn(2+) conditions, SLC39A4 on the cell surface is rapidly endocytosed, ubiquitinated and degraded. In terms of processing, glycosylated. Highly expressed in kidney, small intestine, stomach, colon, jejunum and duodenum.

Its subcellular location is the cell membrane. It localises to the recycling endosome membrane. The protein resides in the apical cell membrane. The catalysed reaction is Zn(2+)(in) = Zn(2+)(out). Its activity is regulated as follows. The Zn(2+) uniporter activity is regulated by zinc availability. Extracellular acidification stimulated SLC39A4-dependent Zn(2+) uptake. Selective transporter that mediates the uptake of Zn(2+). Plays an essential role for dietary zinc uptake from small intestine. The Zn(2+) uniporter activity is regulated by zinc availability. Also exhibits polyspecific binding and transport of Cu(2+), Cd(2+) and possibly Ni(2+) but at higher concentrations. In Homo sapiens (Human), this protein is Zinc transporter ZIP4.